A 735-amino-acid chain; its full sequence is Probable ATP-dependent RNA helicase DHR2 (735 aa).

Polar residues predominate over residues 1 to 13 (MAANSNSRVASNH). Positions 1 to 29 (MAANSNSRVASNHTSKKQKVRRNIHPFTN) are disordered. The span at 14–24 (TSKKQKVRRNI) shows a compositional bias: basic residues. A Helicase ATP-binding domain is found at 91–257 (MSYIESNPVT…FNNAPILFVE (167 aa)). 104 to 111 (GETGSGKS) provides a ligand contact to ATP. Positions 203–206 (DEAH) match the DEAH box motif. One can recognise a Helicase C-terminal domain in the interval 262–456 (DVKQYYLKAP…SPVLMLKRYG (195 aa)).

Belongs to the DEAD box helicase family. DEAH subfamily. Interacts with NOP19. Interacts with UBP10.

The protein resides in the nucleus. It is found in the nucleolus. It carries out the reaction ATP + H2O = ADP + phosphate + H(+). Its function is as follows. Probable ATP-binding RNA helicase. Required for 18S rRNA synthesis. This chain is Probable ATP-dependent RNA helicase DHR2 (DHR2), found in Saccharomyces cerevisiae (strain ATCC 204508 / S288c) (Baker's yeast).